We begin with the raw amino-acid sequence, 317 residues long: (2S)-3-sulfopropanediol dehydratase activating enzyme (317 aa).

A Radical SAM core domain is found at 18–306 (HDGPGLRTEL…QMLAEYFNQR (289 aa)). Residues cysteine 32, cysteine 36, cysteine 39, cysteine 58, cysteine 64, cysteine 67, cysteine 71, cysteine 92, cysteine 95, cysteine 98, and cysteine 102 each contribute to the [4Fe-4S] cluster site. Residue 38 to 40 (WCS) participates in S-adenosyl-L-methionine binding. 4Fe-4S ferredoxin-type domains lie at 49 to 82 (AQVGVYKTKCISYKKCAACEETCPQENILQFTRG) and 83 to 112 (KLTSIERHDCTNCLACHNACPSDAIKLWGK). S-adenosyl-L-methionine contacts are provided by residues glycine 142 and 191-193 (DIK).

This sequence belongs to the organic radical-activating enzymes family. The cofactor is [4Fe-4S] cluster.

It carries out the reaction glycyl-[protein] + reduced [flavodoxin] + S-adenosyl-L-methionine = glycin-2-yl radical-[protein] + semiquinone [flavodoxin] + 5'-deoxyadenosine + L-methionine + H(+). Its pathway is organosulfur degradation; alkanesulfonate degradation. Its function is as follows. Involved in the degradation of the organosulfur compound 2(S)-dihydroxypropanesulfonate (DHPS). Catalyzes activation of the (2S)-3-sulfopropanediol dehydratase HpfG under anaerobic conditions by generation of an organic free radical on a glycine residue. This is (2S)-3-sulfopropanediol dehydratase activating enzyme from Klebsiella oxytoca.